A 191-amino-acid polypeptide reads, in one-letter code: MEAKAAPKPAASGACSVSAEETEKWMEEAMHMAKEALENTEVPVGCLMVYNNEVVGKGRNEVNQTKNATRHAEMVAIDQVLDWCRQSGKSPSEVFEHTVLYVTVEPCIMCAAALRLMKIPLVVYGCQNERFGGCGSVLNIASADLPNTGRPFQCIPGYRAEEAVEMLKTFYKQENPNAPKSKVRKKECQKS.

The CMP/dCMP-type deaminase domain occupies 20-145 (EETEKWMEEA…SVLNIASADL (126 aa)). Zn(2+) is bound at residue H71. E73 serves as the catalytic Proton donor. Residues C107 and C110 each contribute to the Zn(2+) site.

It belongs to the cytidine and deoxycytidylate deaminase family. ADAT2 subfamily. It depends on Zn(2+) as a cofactor.

It carries out the reaction adenosine(34) in tRNA + H2O + H(+) = inosine(34) in tRNA + NH4(+). Its function is as follows. Probably participates in deamination of adenosine-34 to inosine in many tRNAs. The polypeptide is tRNA-specific adenosine deaminase 2 (ADAT2) (Homo sapiens (Human)).